A 256-amino-acid chain; its full sequence is Imidazole glycerol phosphate synthase subunit HisF (256 aa).

Active-site residues include Asp11 and Asp130.

This sequence belongs to the HisA/HisF family. Heterodimer of HisH and HisF.

The protein resides in the cytoplasm. It catalyses the reaction 5-[(5-phospho-1-deoxy-D-ribulos-1-ylimino)methylamino]-1-(5-phospho-beta-D-ribosyl)imidazole-4-carboxamide + L-glutamine = D-erythro-1-(imidazol-4-yl)glycerol 3-phosphate + 5-amino-1-(5-phospho-beta-D-ribosyl)imidazole-4-carboxamide + L-glutamate + H(+). The protein operates within amino-acid biosynthesis; L-histidine biosynthesis; L-histidine from 5-phospho-alpha-D-ribose 1-diphosphate: step 5/9. Its function is as follows. IGPS catalyzes the conversion of PRFAR and glutamine to IGP, AICAR and glutamate. The HisF subunit catalyzes the cyclization activity that produces IGP and AICAR from PRFAR using the ammonia provided by the HisH subunit. This chain is Imidazole glycerol phosphate synthase subunit HisF, found in Prochlorococcus marinus (strain NATL1A).